A 237-amino-acid chain; its full sequence is Ribonuclease PH (237 aa).

Phosphate-binding positions include Arg-86 and 124–126 (GTR).

This sequence belongs to the RNase PH family. Homohexameric ring arranged as a trimer of dimers.

The catalysed reaction is tRNA(n+1) + phosphate = tRNA(n) + a ribonucleoside 5'-diphosphate. Functionally, phosphorolytic 3'-5' exoribonuclease that plays an important role in tRNA 3'-end maturation. Removes nucleotide residues following the 3'-CCA terminus of tRNAs; can also add nucleotides to the ends of RNA molecules by using nucleoside diphosphates as substrates, but this may not be physiologically important. Probably plays a role in initiation of 16S rRNA degradation (leading to ribosome degradation) during starvation. This is Ribonuclease PH from Bradyrhizobium diazoefficiens (strain JCM 10833 / BCRC 13528 / IAM 13628 / NBRC 14792 / USDA 110).